The primary structure comprises 372 residues: Cytochrome b (372 aa).

4 helical membrane passes run phenylalanine 25 to isoleucine 45, tryptophan 69 to isoleucine 90, tryptophan 105 to leucine 125, and phenylalanine 170 to methionine 190. Residues histidine 75 and histidine 89 each contribute to the heme b site. 2 residues coordinate heme b: histidine 174 and histidine 188. Residue histidine 193 coordinates a ubiquinone. Transmembrane regions (helical) follow at residues tyrosine 218–methionine 238, leucine 280–histidine 300, isoleucine 312–threonine 332, and phenylalanine 339–proline 358.

The protein belongs to the cytochrome b family. In terms of assembly, the cytochrome bc1 complex contains 3 respiratory subunits (MT-CYB, CYC1 and UQCRFS1), 2 core proteins (UQCRC1 and UQCRC2) and probably 6 low-molecular weight proteins. Heme b is required as a cofactor.

The protein localises to the mitochondrion inner membrane. Component of the ubiquinol-cytochrome c reductase complex (complex III or cytochrome b-c1 complex) that is part of the mitochondrial respiratory chain. The b-c1 complex mediates electron transfer from ubiquinol to cytochrome c. Contributes to the generation of a proton gradient across the mitochondrial membrane that is then used for ATP synthesis. In Pseudechis australis (Mulga snake), this protein is Cytochrome b (MT-CYB).